The following is a 452-amino-acid chain: MSVVVQHVEEKAVHSWSRISTAGKKALEEALLVFNPMSQDLSATEAQLVAFLQGLRDDGFQPTILRSGDVYGYSSCTANPPSQTKLQARAPTPAATSPPASAPQTAVRLPAGRATLLPMPLSGRLAKASTPGLAKHATTNLLLSSLKQSSAGRAQGAAVGFPTHLYPGVYPAMRLSVVLEALVPIKTPVACLGAKPKAQSLQLSLGDSPLKVRKGPGKRLGNAQLKAPRKATSKGSKCLAQRGPRSGPRQGAGLQSKTCKVTGSLGGPRVKDGGALGTKAAQAKAACAQAKVAQTQATATQARAKAKAVRARAKAKAARIKAREVRARAKAKAVQAKAKVARTQPRGRGRPKGSIQGRTARRSRKSRPETVGQKRKRTEEAKDLSPRKRTRLGPRSPKVQLGPGTARLLKFRAIKVDRLASDDEVRQQAQRILRVNLSPVIRLQPLPPHSAP.

The tract at residues 81 to 106 is disordered; that stretch reads PSQTKLQARAPTPAATSPPASAPQTA. The span at 87–106 shows a compositional bias: low complexity; that stretch reads QARAPTPAATSPPASAPQTA. Ser129 carries the phosphoserine modification. Disordered regions lie at residues 209-256 and 322-404; these read PLKV…GLQS and AREV…LGPG. Residues 279–344 are a coiled coil; sequence KAAQAKAACA…QAKAKVARTQ (66 aa). Residues 332-344 are compositionally biased toward low complexity; that stretch reads KAVQAKAKVARTQ. A compositionally biased stretch (basic and acidic residues) spans 377-386; it reads RTEEAKDLSP.

In Bos taurus (Bovine), this protein is Coiled-coil domain-containing protein 71 (CCDC71).